Here is a 396-residue protein sequence, read N- to C-terminus: Lipid-A-disaccharide synthase (396 aa).

It belongs to the LpxB family.

The enzyme catalyses a lipid X + a UDP-2-N,3-O-bis[(3R)-3-hydroxyacyl]-alpha-D-glucosamine = a lipid A disaccharide + UDP + H(+). It participates in bacterial outer membrane biogenesis; LPS lipid A biosynthesis. Condensation of UDP-2,3-diacylglucosamine and 2,3-diacylglucosamine-1-phosphate to form lipid A disaccharide, a precursor of lipid A, a phosphorylated glycolipid that anchors the lipopolysaccharide to the outer membrane of the cell. The chain is Lipid-A-disaccharide synthase from Acinetobacter baylyi (strain ATCC 33305 / BD413 / ADP1).